Reading from the N-terminus, the 379-residue chain is Inactive deoxyhypusine synthase (379 aa).

The segment at 1–48 (MLASVPAPRPAKKDSAASRRKSASKSTGAAVKDGSSARVSASGAAESP) is disordered. Residues 36–47 (SARVSASGAAES) show a composition bias toward low complexity. Residues 115 to 119 (SNMIS), 141 to 143 (SAG), Glu-147, and Asp-256 each bind NAD(+). Residue 146–147 (EE) participates in spermidine binding. Asp-261 serves as a coordination point for spermidine. An NAD(+)-binding site is contributed by Gly-302. Residue His-307 coordinates spermidine. 323–324 (TG) provides a ligand contact to NAD(+). Residues 329–331 (GCV) and 338–344 (DDVACGL) contribute to the spermidine site. NAD(+) is bound at residue 357–358 (DA).

The protein belongs to the deoxyhypusine synthase family.

This Leishmania donovani protein is Inactive deoxyhypusine synthase.